A 346-amino-acid chain; its full sequence is MSDNQDLRIAVLGVGIMGADHVDRITNKIGGARVTVVNDYSLARAEEIAALTPGSRVVVDPFDAIAAEDVDAVVLATPGPTHEKQVLACLEAGKPVLCEKPLTTDADSSLAIVKAEAALGKKLIQVGFMRRFDHEYTQLKYLIDSGDLGRPLVVHCAHRNPAVPNGFDSAMIVKDSLVHEVDVTRFLLDEEITSVQIIRPSANSLAPEGIQDPQIAIFETESGRHVDAEVFVTTGVAYEVRTEVVGELGSAMIGLDVGLIRKTKPGNWGGQITPGFRERFGQAYDTEFARWIKAVKTGAGTGNYIDGPGAWDGYAAAAVCAAGVKSLETGQRVVVDMVARDSVAGA.

Belongs to the Gfo/Idh/MocA family. In terms of assembly, homotetramer.

The enzyme catalyses myo-inositol + NAD(+) = scyllo-inosose + NADH + H(+). Involved in the oxidation of myo-inositol (MI) to 2-keto-myo-inositol (2KMI or 2-inosose). This Rhodococcus erythropolis (strain PR4 / NBRC 100887) protein is Inositol 2-dehydrogenase.